The sequence spans 251 residues: Triosephosphate isomerase (251 aa).

9–11 (NWK) contributes to the substrate binding site. The active-site Electrophile is histidine 96. Glutamate 168 serves as the catalytic Proton acceptor. Residues glycine 174, serine 214, and 235–236 (GG) contribute to the substrate site.

Belongs to the triosephosphate isomerase family. In terms of assembly, homodimer.

It is found in the cytoplasm. It carries out the reaction D-glyceraldehyde 3-phosphate = dihydroxyacetone phosphate. The protein operates within carbohydrate biosynthesis; gluconeogenesis. It participates in carbohydrate degradation; glycolysis; D-glyceraldehyde 3-phosphate from glycerone phosphate: step 1/1. In terms of biological role, involved in the gluconeogenesis. Catalyzes stereospecifically the conversion of dihydroxyacetone phosphate (DHAP) to D-glyceraldehyde-3-phosphate (G3P). The chain is Triosephosphate isomerase from Cytophaga hutchinsonii (strain ATCC 33406 / DSM 1761 / CIP 103989 / NBRC 15051 / NCIMB 9469 / D465).